Reading from the N-terminus, the 233-residue chain is Ribonuclease 3 (233 aa).

The region spanning 9-136 is the RNase III domain; it reads LQHFWEQFHL…IIGSVYLSGG (128 aa). Glu49 contributes to the Mg(2+) binding site. Residue Asp53 is part of the active site. Positions 122 and 125 each coordinate Mg(2+). Glu125 is an active-site residue. A DRBM domain is found at 162–231; sequence DSKSALQEFV…ARAALALLKV (70 aa).

It belongs to the ribonuclease III family. In terms of assembly, homodimer. Mg(2+) is required as a cofactor.

Its subcellular location is the cytoplasm. The enzyme catalyses Endonucleolytic cleavage to 5'-phosphomonoester.. Digests double-stranded RNA. Involved in the processing of primary rRNA transcript to yield the immediate precursors to the large and small rRNAs (23S and 16S). Processes some mRNAs, and tRNAs when they are encoded in the rRNA operon. Processes pre-crRNA and tracrRNA of type II CRISPR loci if present in the organism. The protein is Ribonuclease 3 of Moorella thermoacetica (strain ATCC 39073 / JCM 9320).